The sequence spans 294 residues: MEQYTKAEILIEALPYICKFHDQKFLIKYGGHAMVNEQARNWIAKDLVLLKYVGINPIVVHGGGPEINRAMEKMGKTPEFIHGLRVTDEETLEIVKMVLIGKINGDIVSKLERYGGKAVGLSGKSGQLIKAKKKIQYLMKDSQKIEIDLGMVGEVEHVDTKLIDILVEKRYIPVISPIGVDHQGNDLNLNADIAAGDIAGAMNAEKLIMVTDVDGIMDDINDQSTLHRRLTISQIEDMIEKGFITGGMIPKIEACINALDKGVQSVHIVNGKTPHAVLLEIFTEEGVGTMIVKE.

Residues glycine 63–glycine 64, arginine 85, and asparagine 188 contribute to the substrate site.

The protein belongs to the acetylglutamate kinase family. ArgB subfamily.

It is found in the cytoplasm. It catalyses the reaction N-acetyl-L-glutamate + ATP = N-acetyl-L-glutamyl 5-phosphate + ADP. It participates in amino-acid biosynthesis; L-arginine biosynthesis; N(2)-acetyl-L-ornithine from L-glutamate: step 2/4. Its function is as follows. Catalyzes the ATP-dependent phosphorylation of N-acetyl-L-glutamate. This Methanococcus maripaludis (strain C6 / ATCC BAA-1332) protein is Acetylglutamate kinase.